The following is a 149-amino-acid chain: 3-dehydroquinate dehydratase (149 aa).

The active-site Proton acceptor is the tyrosine 26. Positions 77, 83, and 90 each coordinate substrate. Catalysis depends on histidine 103, which acts as the Proton donor. Residues 104 to 105 (LS) and arginine 114 contribute to the substrate site.

Belongs to the type-II 3-dehydroquinase family. As to quaternary structure, homododecamer.

The enzyme catalyses 3-dehydroquinate = 3-dehydroshikimate + H2O. Its pathway is metabolic intermediate biosynthesis; chorismate biosynthesis; chorismate from D-erythrose 4-phosphate and phosphoenolpyruvate: step 3/7. Catalyzes a trans-dehydration via an enolate intermediate. This Psychromonas ingrahamii (strain DSM 17664 / CCUG 51855 / 37) protein is 3-dehydroquinate dehydratase.